The chain runs to 426 residues: Glutamyl-tRNA reductase (426 aa).

Substrate-binding positions include threonine 49–arginine 52, serine 109, glutamate 114–glutamine 116, and glutamine 120. Catalysis depends on cysteine 50, which acts as the Nucleophile. Glycine 189 to glycine 194 serves as a coordination point for NADP(+).

Belongs to the glutamyl-tRNA reductase family. As to quaternary structure, homodimer.

It carries out the reaction (S)-4-amino-5-oxopentanoate + tRNA(Glu) + NADP(+) = L-glutamyl-tRNA(Glu) + NADPH + H(+). Its pathway is porphyrin-containing compound metabolism; protoporphyrin-IX biosynthesis; 5-aminolevulinate from L-glutamyl-tRNA(Glu): step 1/2. It participates in porphyrin-containing compound metabolism; chlorophyll biosynthesis. Its function is as follows. Catalyzes the NADPH-dependent reduction of glutamyl-tRNA(Glu) to glutamate 1-semialdehyde (GSA). This is Glutamyl-tRNA reductase from Chlorobium chlorochromatii (strain CaD3).